A 105-amino-acid polypeptide reads, in one-letter code: Large ribosomal subunit protein uL24 (105 aa).

The protein belongs to the universal ribosomal protein uL24 family. Part of the 50S ribosomal subunit.

Functionally, one of two assembly initiator proteins, it binds directly to the 5'-end of the 23S rRNA, where it nucleates assembly of the 50S subunit. In terms of biological role, one of the proteins that surrounds the polypeptide exit tunnel on the outside of the subunit. The sequence is that of Large ribosomal subunit protein uL24 from Mycobacterium avium (strain 104).